The chain runs to 305 residues: Oxygen-dependent coproporphyrinogen-III oxidase (305 aa).

Ser98 serves as a coordination point for substrate. A divalent metal cation is bound by residues His102 and His112. The Proton donor role is filled by His112. Residue 114–116 (NVR) participates in substrate binding. 2 residues coordinate a divalent metal cation: His151 and His181. Positions 246-281 (YVEFNLVYDRGTLFGLQSGGRTESILMSMPPLARWE) are important for dimerization. 264-266 (GGR) contributes to the substrate binding site.

It belongs to the aerobic coproporphyrinogen-III oxidase family. In terms of assembly, homodimer. Requires a divalent metal cation as cofactor.

It is found in the cytoplasm. The enzyme catalyses coproporphyrinogen III + O2 + 2 H(+) = protoporphyrinogen IX + 2 CO2 + 2 H2O. It participates in porphyrin-containing compound metabolism; protoporphyrin-IX biosynthesis; protoporphyrinogen-IX from coproporphyrinogen-III (O2 route): step 1/1. Its function is as follows. Involved in the heme biosynthesis. Catalyzes the aerobic oxidative decarboxylation of propionate groups of rings A and B of coproporphyrinogen-III to yield the vinyl groups in protoporphyrinogen-IX. In Vibrio atlanticus (strain LGP32) (Vibrio splendidus (strain Mel32)), this protein is Oxygen-dependent coproporphyrinogen-III oxidase.